Reading from the N-terminus, the 320-residue chain is ATP-dependent 6-phosphofructokinase (320 aa).

ATP is bound by residues G11, 72–73 (RY), and 102–105 (GDGS). D103 is a binding site for Mg(2+). Substrate is bound by residues 125–127 (TID), R162, 169–171 (MGR), E222, R243, and 249–252 (HMQR). The Proton acceptor role is filled by D127.

This sequence belongs to the phosphofructokinase type A (PFKA) family. ATP-dependent PFK group I subfamily. Prokaryotic clade 'B1' sub-subfamily. In terms of assembly, homotetramer. The cofactor is Mg(2+).

It is found in the cytoplasm. The catalysed reaction is beta-D-fructose 6-phosphate + ATP = beta-D-fructose 1,6-bisphosphate + ADP + H(+). It participates in carbohydrate degradation; glycolysis; D-glyceraldehyde 3-phosphate and glycerone phosphate from D-glucose: step 3/4. Allosterically activated by ADP and other diphosphonucleosides, and allosterically inhibited by phosphoenolpyruvate. Catalyzes the phosphorylation of D-fructose 6-phosphate to fructose 1,6-bisphosphate by ATP, the first committing step of glycolysis. This Lactiplantibacillus plantarum (strain ATCC BAA-793 / NCIMB 8826 / WCFS1) (Lactobacillus plantarum) protein is ATP-dependent 6-phosphofructokinase.